The sequence spans 83 residues: MSFLDYFLGSRKKSANVAKDRLKLILAHERDADGPDFLPALQEELLAVIAKYIPVDKENIKVSMERRGDFEVLELNVLFPDQH.

This sequence belongs to the MinE family.

Functionally, prevents the cell division inhibition by proteins MinC and MinD at internal division sites while permitting inhibition at polar sites. This ensures cell division at the proper site by restricting the formation of a division septum at the midpoint of the long axis of the cell. The sequence is that of Cell division topological specificity factor from Acidithiobacillus ferrooxidans (strain ATCC 23270 / DSM 14882 / CIP 104768 / NCIMB 8455) (Ferrobacillus ferrooxidans (strain ATCC 23270)).